We begin with the raw amino-acid sequence, 293 residues long: Pyridoxal 5'-phosphate synthase subunit PdxS (293 aa).

Aspartate 23 serves as a coordination point for D-ribose 5-phosphate. Residue lysine 80 is the Schiff-base intermediate with D-ribose 5-phosphate of the active site. A D-ribose 5-phosphate-binding site is contributed by glycine 152. Residue arginine 164 participates in D-glyceraldehyde 3-phosphate binding. Residues glycine 213 and 234–235 (GS) each bind D-ribose 5-phosphate.

Belongs to the PdxS/SNZ family. In the presence of PdxT, forms a dodecamer of heterodimers.

It catalyses the reaction aldehydo-D-ribose 5-phosphate + D-glyceraldehyde 3-phosphate + L-glutamine = pyridoxal 5'-phosphate + L-glutamate + phosphate + 3 H2O + H(+). The protein operates within cofactor biosynthesis; pyridoxal 5'-phosphate biosynthesis. In terms of biological role, catalyzes the formation of pyridoxal 5'-phosphate from ribose 5-phosphate (RBP), glyceraldehyde 3-phosphate (G3P) and ammonia. The ammonia is provided by the PdxT subunit. Can also use ribulose 5-phosphate and dihydroxyacetone phosphate as substrates, resulting from enzyme-catalyzed isomerization of RBP and G3P, respectively. The polypeptide is Pyridoxal 5'-phosphate synthase subunit PdxS (Thermus thermophilus (strain ATCC BAA-163 / DSM 7039 / HB27)).